The following is a 296-amino-acid chain: MNNQSNCAPIFNRETHWPSPAKLNLFLYITGQRPNGYHELQTLFQFLDYGDTLTITATNTSAITINPAIEGVTTEDNLIYRAADALRQATGTMLGAHIEIDKILPMGGGLGGGSSNAATTLVALNYLWQTQLDLDKLADIGLALGADVPVFVKGFSAFAEGVGEKLLPATPQEKWFLVTKPNVSIATVDIFTHPDLIRNTEKRSLKALLAGVYENDCEKIVRRLHPEVDKAVSWLLEYAPSRLTGTGACVFAEFSSQQEADAILKKLPDWLHGFVAKGVNTSPLMATLHVHSTDCQ.

The active site involves Lys22. Residue 105-115 (PMGGGLGGGSS) coordinates ATP. Residue Asp147 is part of the active site.

The protein belongs to the GHMP kinase family. IspE subfamily.

The enzyme catalyses 4-CDP-2-C-methyl-D-erythritol + ATP = 4-CDP-2-C-methyl-D-erythritol 2-phosphate + ADP + H(+). The protein operates within isoprenoid biosynthesis; isopentenyl diphosphate biosynthesis via DXP pathway; isopentenyl diphosphate from 1-deoxy-D-xylulose 5-phosphate: step 3/6. Catalyzes the phosphorylation of the position 2 hydroxy group of 4-diphosphocytidyl-2C-methyl-D-erythritol. The chain is 4-diphosphocytidyl-2-C-methyl-D-erythritol kinase from Photobacterium profundum (strain SS9).